We begin with the raw amino-acid sequence, 447 residues long: Citrate synthase-like protein oryE (447 aa).

Active-site residues include histidine 331 and aspartate 387.

It belongs to the citrate synthase family.

It functions in the pathway secondary metabolite biosynthesis. Functionally, citrate synthase-like protein; part of the gene cluster that mediates the biosynthesis of oryzines, natural products with an unusual maleidride backbone. The two subunits of the fungal fatty acid synthase oryfasA and oryfasB probably form octenoic acid. This fatty acid is most likely activated by the acyl-CoA ligase oryP to give octenyl-CoA before the citrate synthase-like protein oryE catalyzes condensation with oxaloacetate to form tricarboxylic acid. The next steps of the pathways are conjectural, but a favorite possible route has been proposed, beginning with decarboxylation and concomitant dehydration by the decarboxylase oryM, followed by tautomerization, which may lead to the production of a diene intermediate. Reduction of this diene intermediate could give the known metabolite piliformic acid. On the pathway to oryzine B and oryzine A, however, hydroxylation of the diene by the alpha-ketoglutarate-dependent dioxygenase oryG and lactonisation by the lactonohydrolases oryH or oryL could give oryzine B directly. Finally, enoyl reduction by the dehydrogenase oryD would then convert oryzine B into oryzine A. In Aspergillus oryzae (strain ATCC 42149 / RIB 40) (Yellow koji mold), this protein is Citrate synthase-like protein oryE.